The sequence spans 192 residues: Riboflavin kinase (192 aa).

Positions 47 and 49 each coordinate Mg(2+). E129 acts as the Nucleophile in catalysis.

Belongs to the flavokinase family. Zn(2+) serves as cofactor. Requires Mg(2+) as cofactor.

It catalyses the reaction riboflavin + ATP = FMN + ADP + H(+). It functions in the pathway cofactor biosynthesis; FMN biosynthesis; FMN from riboflavin (ATP route): step 1/1. In terms of biological role, catalyzes the phosphorylation of riboflavin (vitamin B2) to form flavin mononucleotide (FMN) coenzyme. The polypeptide is Riboflavin kinase (FMN1) (Yarrowia lipolytica (strain CLIB 122 / E 150) (Yeast)).